Reading from the N-terminus, the 308-residue chain is HPr kinase/phosphorylase (308 aa).

Active-site residues include histidine 138 and lysine 159. Glycine 153–serine 160 contributes to the ATP binding site. Serine 160 lines the Mg(2+) pocket. Aspartate 177 functions as the Proton acceptor; for phosphorylation activity. Proton donor; for dephosphorylation activity in the catalytic mechanism. The important for the catalytic mechanism of both phosphorylation and dephosphorylation stretch occupies residues leucine 201 to aspartate 210. A Mg(2+)-binding site is contributed by glutamate 202. Arginine 243 is a catalytic residue. The important for the catalytic mechanism of dephosphorylation stretch occupies residues glutamine 264 to arginine 269.

It belongs to the HPrK/P family. In terms of assembly, homohexamer. Mg(2+) is required as a cofactor.

The catalysed reaction is [HPr protein]-L-serine + ATP = [HPr protein]-O-phospho-L-serine + ADP + H(+). It catalyses the reaction [HPr protein]-O-phospho-L-serine + phosphate + H(+) = [HPr protein]-L-serine + diphosphate. Functionally, catalyzes the ATP- as well as the pyrophosphate-dependent phosphorylation of a specific serine residue in HPr, a phosphocarrier protein of the phosphoenolpyruvate-dependent sugar phosphotransferase system (PTS). HprK/P also catalyzes the pyrophosphate-producing, inorganic phosphate-dependent dephosphorylation (phosphorolysis) of seryl-phosphorylated HPr (P-Ser-HPr). This Bordetella avium (strain 197N) protein is HPr kinase/phosphorylase.